The following is a 118-amino-acid chain: Protein TusC (118 aa).

This sequence belongs to the DsrF/TusC family. In terms of assembly, heterohexamer, formed by a dimer of trimers. The hexameric TusBCD complex contains 2 copies each of TusB, TusC and TusD. The TusBCD complex interacts with TusE.

Its subcellular location is the cytoplasm. Part of a sulfur-relay system required for 2-thiolation of 5-methylaminomethyl-2-thiouridine (mnm(5)s(2)U) at tRNA wobble positions. The sequence is that of Protein TusC from Salmonella arizonae (strain ATCC BAA-731 / CDC346-86 / RSK2980).